Here is a 355-residue protein sequence, read N- to C-terminus: Peptide chain release factor 1 (355 aa).

Glutamine 233 carries the N5-methylglutamine modification.

This sequence belongs to the prokaryotic/mitochondrial release factor family. Methylated by PrmC. Methylation increases the termination efficiency of RF1.

It localises to the cytoplasm. In terms of biological role, peptide chain release factor 1 directs the termination of translation in response to the peptide chain termination codons UAG and UAA. This is Peptide chain release factor 1 from Amoebophilus asiaticus (strain 5a2).